Consider the following 240-residue polypeptide: C-type lectin domain family 4 member A (240 aa).

The Cytoplasmic segment spans residues 1 to 48 (MASEITYAEVRIKNESNSSVTYSGSPAAPREKPTRHLSKPGSLLVPFT). The ITIM motif signature appears at 5–10 (ITYAEV). Residues 18 to 38 (SSVTYSGSPAAPREKPTRHLS) form a disordered region. The helical; Signal-anchor for type II membrane protein transmembrane segment at 49 to 69 (SLMVLLLLLAITFLVAFIIYF) threads the bilayer. Residues 70–240 (QKYSQFLEEK…SVCQMKKIQL (171 aa)) are Extracellular-facing. Cystine bridges form between C107–C118, C140–C233, and C208–C225. The C-type lectin domain occupies 129–235 (SKASWSESEK…SGKQQSVCQM (107 aa)). Residues V149 and E155 each contribute to the Ca(2+) site. A glycan (N-linked (GlcNAc...) asparagine) is linked at N190. The Ca(2+) site is built by E200, S202, and E206. Alpha-D-mannopyranose is bound by residues 200 to 202 (EPS) and E206. 211–213 (INH) contacts N-acetyl-D-glucosamine. 2 residues coordinate Ca(2+): N221 and D222.

May interact with PTPN6 via its ITIM site. As to expression, expressed by myeloid cells (dendritic cells, macrophages, and neutrophils) and B-cells.

It is found in the cell membrane. Its function is as follows. C-type lectin receptor that binds carbohydrates mannose and fucose but also weakly interacts with N-acetylglucosamine (GlcNAc) in a Ca(2+)-dependent manner. Involved in regulating immune reactivity. Once triggered by antigen, it is internalized by clathrin-dependent endocytosis and delivers its antigenic cargo into the antigen presentation pathway resulting in cross-priming of CD8(+) T cells. This cross-presentation and cross-priming are enhanced by TLR7 and TLR8 agonists with increased expansion of the CD8(+) T cells, high production of IFNG and TNF with reduced levels of IL4, IL5 and IL13. In plasmacytoid dendritic cells, inhibits TLR9-mediated IFNA and TNF production. May be involved via its ITIM motif (immunoreceptor tyrosine-based inhibitory motifs) in the inhibition of B-cell-receptor-mediated calcium mobilization and protein tyrosine phosphorylation. This chain is C-type lectin domain family 4 member A (Clec4a), found in Rattus norvegicus (Rat).